Consider the following 315-residue polypeptide: Acetyl-coenzyme A carboxylase carboxyl transferase subunit alpha (315 aa).

A CoA carboxyltransferase C-terminal domain is found at 40–293 (LEDKKIALTK…KKNVLAALDR (254 aa)).

This sequence belongs to the AccA family. Acetyl-CoA carboxylase is a heterohexamer composed of biotin carboxyl carrier protein (AccB), biotin carboxylase (AccC) and two subunits each of ACCase subunit alpha (AccA) and ACCase subunit beta (AccD).

It localises to the cytoplasm. It catalyses the reaction N(6)-carboxybiotinyl-L-lysyl-[protein] + acetyl-CoA = N(6)-biotinyl-L-lysyl-[protein] + malonyl-CoA. It functions in the pathway lipid metabolism; malonyl-CoA biosynthesis; malonyl-CoA from acetyl-CoA: step 1/1. In terms of biological role, component of the acetyl coenzyme A carboxylase (ACC) complex. First, biotin carboxylase catalyzes the carboxylation of biotin on its carrier protein (BCCP) and then the CO(2) group is transferred by the carboxyltransferase to acetyl-CoA to form malonyl-CoA. This Marinomonas sp. (strain MWYL1) protein is Acetyl-coenzyme A carboxylase carboxyl transferase subunit alpha.